Consider the following 223-residue polypeptide: Deoxyribose-phosphate aldolase (223 aa).

Asp-89 serves as the catalytic Proton donor/acceptor. Residue Lys-152 is the Schiff-base intermediate with acetaldehyde of the active site. Lys-181 serves as the catalytic Proton donor/acceptor.

This sequence belongs to the DeoC/FbaB aldolase family. DeoC type 1 subfamily.

It localises to the cytoplasm. It catalyses the reaction 2-deoxy-D-ribose 5-phosphate = D-glyceraldehyde 3-phosphate + acetaldehyde. Its pathway is carbohydrate degradation; 2-deoxy-D-ribose 1-phosphate degradation; D-glyceraldehyde 3-phosphate and acetaldehyde from 2-deoxy-alpha-D-ribose 1-phosphate: step 2/2. Catalyzes a reversible aldol reaction between acetaldehyde and D-glyceraldehyde 3-phosphate to generate 2-deoxy-D-ribose 5-phosphate. In Bacillus cereus (strain Q1), this protein is Deoxyribose-phosphate aldolase.